The following is a 523-amino-acid chain: Cysteine-rich secretory protein LCCL domain-containing 1 (523 aa).

An N-terminal signal peptide occupies residues 1–23 (MKYVVQEWLRITTLLFIAQAVSA). The region spanning 66-206 (LDLHNKLRGQ…PKAVYLVCNY (141 aa)) is the SCP domain. Residues 246–298 (ERPYSPHEPEEETNEIERQRSKAQDATAQSRPRTHSPSGSTGSEDSEKNEVIS) form a disordered region. The span at 269-288 (QDATAQSRPRTHSPSGSTGS) shows a compositional bias: polar residues. LCCL domains are found at residues 302-397 (MSQI…ANSF) and 403-505 (TVQA…PGKQ). 4 cysteine pairs are disulfide-bonded: Cys-308–Cys-326, Cys-330–Cys-350, Cys-409–Cys-431, and Cys-435–Cys-458.

This sequence belongs to the CRISP family.

The protein resides in the secreted. This is Cysteine-rich secretory protein LCCL domain-containing 1 (CRISPLD1) from Gallus gallus (Chicken).